The chain runs to 495 residues: Ectonucleoside triphosphate diphosphohydrolase 8 (495 aa).

At 1–8 (MGLTWKQR) the chain is on the cytoplasmic side. The chain crosses the membrane as a helical span at residues 9-29 (VFTALLGAAAVSGLTALLLVL). At 30–466 (VGTMNVLLPP…PAQGWAQSFG (437 aa)) the chain is on the extracellular side. A disulfide bridge connects residues Cys-78 and Cys-102. Glu-168 (proton acceptor) is an active-site residue. The cysteines at positions 246 and 292 are disulfide-linked. N-linked (GlcNAc...) asparagine glycans are attached at residues Asn-303 and Asn-324. 2 disulfides stabilise this stretch: Cys-328-Cys-334 and Cys-380-Cys-403. Residues 467–487 (VWAAGVVFVVLTLAATLGAVA) traverse the membrane as a helical segment. The Cytoplasmic segment spans residues 488-495 (VQVFWLQD).

Belongs to the GDA1/CD39 NTPase family. Requires Ca(2+) as cofactor. Mg(2+) is required as a cofactor. Post-translationally, N-glycosylated.

Its subcellular location is the cell membrane. It catalyses the reaction a ribonucleoside 5'-triphosphate + 2 H2O = a ribonucleoside 5'-phosphate + 2 phosphate + 2 H(+). Its function is as follows. Canalicular ectonucleoside NTPDase responsible for the main hepatic NTPDase activity. Ectonucleoside NTPDases catalyze the hydrolysis of gamma- and beta-phosphate residues of nucleotides, playing a central role in concentration of extracellular nucleotides. Has activity toward ATP, ADP, UTP and UDP, but not toward AMP. This Bos taurus (Bovine) protein is Ectonucleoside triphosphate diphosphohydrolase 8 (ENTPD8).